The sequence spans 223 residues: 3,4-dihydroxy-2-butanone 4-phosphate synthase (223 aa).

D-ribulose 5-phosphate-binding positions include 47 to 48 (RE), Asp52, 160 to 164 (RRGHT), and Glu184. Glu48 provides a ligand contact to Mg(2+). His163 provides a ligand contact to Mg(2+).

This sequence belongs to the DHBP synthase family. In terms of assembly, homodimer. Requires Mg(2+) as cofactor. Mn(2+) is required as a cofactor.

It catalyses the reaction D-ribulose 5-phosphate = (2S)-2-hydroxy-3-oxobutyl phosphate + formate + H(+). The protein operates within cofactor biosynthesis; riboflavin biosynthesis; 2-hydroxy-3-oxobutyl phosphate from D-ribulose 5-phosphate: step 1/1. In terms of biological role, catalyzes the conversion of D-ribulose 5-phosphate to formate and 3,4-dihydroxy-2-butanone 4-phosphate. The polypeptide is 3,4-dihydroxy-2-butanone 4-phosphate synthase (Cupriavidus pinatubonensis (strain JMP 134 / LMG 1197) (Cupriavidus necator (strain JMP 134))).